The following is a 264-amino-acid chain: Undecaprenyl-diphosphatase (264 aa).

8 helical membrane passes run 1-21 (MDLI…FLPI), 39-59 (QGLA…AVYF), 87-107 (WYLI…DDLI), 111-131 (LRST…LWVA), 144-164 (IALS…IPGT), 187-207 (FSFL…GLQL), 208-228 (VLSA…LSAV), and 244-264 (IGML…FIAV).

Belongs to the UppP family.

The protein localises to the cell inner membrane. It carries out the reaction di-trans,octa-cis-undecaprenyl diphosphate + H2O = di-trans,octa-cis-undecaprenyl phosphate + phosphate + H(+). Functionally, catalyzes the dephosphorylation of undecaprenyl diphosphate (UPP). Confers resistance to bacitracin. This is Undecaprenyl-diphosphatase from Teredinibacter turnerae (strain ATCC 39867 / T7901).